A 567-amino-acid polypeptide reads, in one-letter code: TPR repeat-containing protein MJ1428 (567 aa).

13 TPR repeats span residues 14–47, 48–81, 83–115, 116–148, 150–183, 199–234, 236–268, 269–301, 303–335, 344–379, 380–412, 414–446, and 505–538; these read YEDW…KNTN, PIDW…SPSN, YFAY…IKNE, ELFE…ANSK, LNAL…NPSH, INSY…DENS, ISYY…FNRS, LYYA…NSQN, YAYF…YLEE, LNLY…ENSS, RWWY…NPKD, STLK…VNSL, and AYIY…EMYR.

The chain is TPR repeat-containing protein MJ1428 from Methanocaldococcus jannaschii (strain ATCC 43067 / DSM 2661 / JAL-1 / JCM 10045 / NBRC 100440) (Methanococcus jannaschii).